The chain runs to 211 residues: Thymidylate kinase (211 aa).

11 to 18 (GPDGAGKT) provides a ligand contact to ATP.

The protein belongs to the thymidylate kinase family.

It carries out the reaction dTMP + ATP = dTDP + ADP. Its function is as follows. Phosphorylation of dTMP to form dTDP in both de novo and salvage pathways of dTTP synthesis. This is Thymidylate kinase from Streptococcus pyogenes serotype M18 (strain MGAS8232).